Reading from the N-terminus, the 715-residue chain is Fatty acid oxidation complex subunit alpha (715 aa).

The segment at M1–A190 is enoyl-CoA hydratase/isomerase. Residue D297 participates in substrate binding. The 3-hydroxyacyl-CoA dehydrogenase stretch occupies residues K312 to G715. NAD(+)-binding positions include M325, D344, V401–E403, K408, and S430. H451 functions as the For 3-hydroxyacyl-CoA dehydrogenase activity in the catalytic mechanism. Residue N454 participates in NAD(+) binding. N501 and Y660 together coordinate substrate.

It in the N-terminal section; belongs to the enoyl-CoA hydratase/isomerase family. In the C-terminal section; belongs to the 3-hydroxyacyl-CoA dehydrogenase family. As to quaternary structure, heterotetramer of two alpha chains (FadB) and two beta chains (FadA).

It catalyses the reaction a (3S)-3-hydroxyacyl-CoA + NAD(+) = a 3-oxoacyl-CoA + NADH + H(+). The catalysed reaction is a (3S)-3-hydroxyacyl-CoA = a (2E)-enoyl-CoA + H2O. It carries out the reaction a 4-saturated-(3S)-3-hydroxyacyl-CoA = a (3E)-enoyl-CoA + H2O. The enzyme catalyses (3S)-3-hydroxybutanoyl-CoA = (3R)-3-hydroxybutanoyl-CoA. It catalyses the reaction a (3Z)-enoyl-CoA = a 4-saturated (2E)-enoyl-CoA. The catalysed reaction is a (3E)-enoyl-CoA = a 4-saturated (2E)-enoyl-CoA. The protein operates within lipid metabolism; fatty acid beta-oxidation. Functionally, involved in the aerobic and anaerobic degradation of long-chain fatty acids via beta-oxidation cycle. Catalyzes the formation of 3-oxoacyl-CoA from enoyl-CoA via L-3-hydroxyacyl-CoA. It can also use D-3-hydroxyacyl-CoA and cis-3-enoyl-CoA as substrate. This chain is Fatty acid oxidation complex subunit alpha, found in Pseudomonas paraeruginosa (strain DSM 24068 / PA7) (Pseudomonas aeruginosa (strain PA7)).